The primary structure comprises 457 residues: NAC domain-containing protein 69 (457 aa).

Residues aspartate 4–lysine 153 form the NAC domain. The DNA-binding element occupies isoleucine 107 to valine 159. Disordered regions lie at residues aspartate 158–valine 180 and aspartate 302–glutamine 332. Positions glycine 162–valine 180 are enriched in polar residues. The span at aspartate 302 to serine 311 shows a compositional bias: low complexity. Over residues alanine 312–glutamine 332 the composition is skewed to polar residues. Residues isoleucine 421–isoleucine 441 form a helical membrane-spanning segment.

It localises to the membrane. The protein localises to the nucleus. Transcription activator activated by proteolytic cleavage through regulated intramembrane proteolysis (RIP). Involved in salt stress response during seed germination and seedling growth. Binds the auxin-responsive IAA30 gene promoter and may serve as a molecular link that interconnects a developmental feedback loop of auxin signaling with a salt signal transduction pathway during seed germination. This Arabidopsis thaliana (Mouse-ear cress) protein is NAC domain-containing protein 69 (NAC69).